The sequence spans 572 residues: MAAPRPSPAISVSVSAPAFYAPQKKFGPVVAPKPKVNPFRPGDSEPPPAPGAQRAQMGRVGEIPPPPPEDFPLPPPPLAGDGDDAEGALGGAFPPPPPPIEESFPPAPLEEEIFPSPPPPPEEEGGPEAPIPPPPQPREKVSSIDLEIDSLSSLLDDMTKNDPFKARVSSGYVPPPVATPFSSKSSTKPAAGGTAPLPPWKSPSSSQPLPQVPAPAQSQTQFHVQPQPQPKPQVQLHVQSQTQPVSLANTQPRGPPASSPAPAPKFSPVTPKFTPVASKFSPGAPGGSGSQPNQKLGHPEALSAGTGSPQPPSFTYAQQREKPRVQEKQHPVPPPAQNQNQVRSPGAPGPLTLKEVEELEQLTQQLMQDMEHPQRQNVAVNELCGRCHQPLARAQPAVRALGQLFHIACFTCHQCAQQLQGQQFYSLEGAPYCEGCYTDTLEKCNTCGEPITDRMLRATGKAYHPHCFTCVVCARPLEGTSFIVDQANRPHCVPDYHKQYAPRCSVCSEPIMPEPGRDETVRVVALDKNFHMKCYKCEDCGKPLSIEADDNGCFPLDGHVLCRKCHTARAQT.

The residue at position 2 (Ala-2) is an N-acetylalanine. Residues 23-351 (QKKFGPVVAP…VRSPGAPGPL (329 aa)) form a disordered region. Composition is skewed to pro residues over residues 63 to 78 (IPPP…PPPL) and 93 to 108 (FPPP…PPAP). 5 positions are modified to phosphoserine: Ser-116, Ser-142, Ser-143, Ser-169, and Ser-170. Positions 143-156 (SIDLEIDSLSSLLD) are enriched in low complexity. Thr-179 is modified (phosphothreonine). Positions 202–239 (SPSSSQPLPQVPAPAQSQTQFHVQPQPQPKPQVQLHVQ) are enriched in low complexity. Residues 240-252 (SQTQPVSLANTQP) are compositionally biased toward polar residues. Position 253 is an asymmetric dimethylarginine (Arg-253). Pro residues predominate over residues 253–265 (RGPPASSPAPAPK). Ser-259 is subject to Phosphoserine. Lys-265 carries the N6-acetyllysine modification. Phosphoserine is present on Ser-267. Position 270 is a phosphothreonine (Thr-270). Lys-272 carries the N6-acetyllysine modification. Residue Thr-274 is modified to Phosphothreonine. Lys-279 bears the N6-acetyllysine mark. Phosphoserine occurs at positions 281, 288, and 308. Residues 305–318 (GTGSPQPPSFTYAQ) show a composition bias toward polar residues. Basic and acidic residues predominate over residues 319-330 (QREKPRVQEKQH). Ser-344 carries the phosphoserine modification. LIM zinc-binding domains are found at residues 384 to 443 (CGRC…TLEK), 444 to 503 (CNTC…YAPR), and 504 to 570 (CSVC…TARA).

Belongs to the zyxin/ajuba family. In terms of assembly, interacts with HPV type 6 protein E6. Does not interact significantly with E6 proteins from HPV types 11, 16, or 18. Interacts, via the Pro-rich regions, with the EVH1 domains of ENAH, EVL and VASP. Interacts with the first LIM domain of TES. Interacts with NEBL (isoform 2). Interacts with SYNPO2. As to quaternary structure, (Microbial infection) Interacts with human papillomavirus type 6/HPV6 protein E6. Does not interact significantly with E6 proteins from HPV types 11, 16, or 18.

Its subcellular location is the cytoplasm. It localises to the cytoskeleton. The protein localises to the nucleus. It is found in the cell junction. The protein resides in the focal adhesion. Functionally, adhesion plaque protein. Binds alpha-actinin and the CRP protein. Important for targeting TES and ENA/VASP family members to focal adhesions and for the formation of actin-rich structures. May be a component of a signal transduction pathway that mediates adhesion-stimulated changes in gene expression. The sequence is that of Zyxin (ZYX) from Homo sapiens (Human).